A 125-amino-acid polypeptide reads, in one-letter code: Large ribosomal subunit protein eL22 (125 aa).

The protein belongs to the eukaryotic ribosomal protein eL22 family. In terms of assembly, component of the large ribosomal subunit.

The protein localises to the cytoplasm. Functionally, component of the large ribosomal subunit. The ribosome is a large ribonucleoprotein complex responsible for the synthesis of proteins in the cell. The protein is Large ribosomal subunit protein eL22 (rpl22) of Gadus morhua (Atlantic cod).